The sequence spans 336 residues: DNA polymerase III subunit delta' (336 aa).

In terms of assembly, DNA polymerase III contains a core (composed of alpha, epsilon and theta chains) that associates with a tau subunit. This core dimerizes to form the POLIII' complex. PolIII' associates with the gamma complex (composed of gamma, delta, delta', psi and chi chains) and with the beta chain to form the complete DNA polymerase III complex.

It carries out the reaction DNA(n) + a 2'-deoxyribonucleoside 5'-triphosphate = DNA(n+1) + diphosphate. Its function is as follows. DNA polymerase III is a complex, multichain enzyme responsible for most of the replicative synthesis in bacteria. This DNA polymerase also exhibits 3' to 5' exonuclease activity. The chain is DNA polymerase III subunit delta' (holB) from Buchnera aphidicola subsp. Baizongia pistaciae (strain Bp).